A 166-amino-acid polypeptide reads, in one-letter code: Small ribosomal subunit protein uS9 (166 aa).

Residues 135–166 are disordered; it reads KKAGFLTRDPRATERKKYGLKKARKAPQYSKR. Residues 142-151 are compositionally biased toward basic and acidic residues; that stretch reads RDPRATERKK. Over residues 152-166 the composition is skewed to basic residues; it reads YGLKKARKAPQYSKR.

It belongs to the universal ribosomal protein uS9 family.

This is Small ribosomal subunit protein uS9 from Mycobacterium avium (strain 104).